The chain runs to 728 residues: Phosphoribosylformylglycinamidine synthase subunit PurL (728 aa).

The active site involves His42. ATP contacts are provided by Tyr45 and Lys84. A Mg(2+)-binding site is contributed by Glu86. Residues 87–90 (SHNH) and Arg109 each bind substrate. The active-site Proton acceptor is the His88. Asp110 is a binding site for Mg(2+). Gln237 provides a ligand contact to substrate. Asp265 is a binding site for Mg(2+). Residue 309–311 (ESQ) coordinates substrate. ATP contacts are provided by Asp491 and Gly528. Asn529 contributes to the Mg(2+) binding site. Ser531 serves as a coordination point for substrate.

It belongs to the FGAMS family. As to quaternary structure, monomer. Part of the FGAM synthase complex composed of 1 PurL, 1 PurQ and 2 PurS subunits.

It is found in the cytoplasm. The enzyme catalyses N(2)-formyl-N(1)-(5-phospho-beta-D-ribosyl)glycinamide + L-glutamine + ATP + H2O = 2-formamido-N(1)-(5-O-phospho-beta-D-ribosyl)acetamidine + L-glutamate + ADP + phosphate + H(+). It participates in purine metabolism; IMP biosynthesis via de novo pathway; 5-amino-1-(5-phospho-D-ribosyl)imidazole from N(2)-formyl-N(1)-(5-phospho-D-ribosyl)glycinamide: step 1/2. Part of the phosphoribosylformylglycinamidine synthase complex involved in the purines biosynthetic pathway. Catalyzes the ATP-dependent conversion of formylglycinamide ribonucleotide (FGAR) and glutamine to yield formylglycinamidine ribonucleotide (FGAM) and glutamate. The FGAM synthase complex is composed of three subunits. PurQ produces an ammonia molecule by converting glutamine to glutamate. PurL transfers the ammonia molecule to FGAR to form FGAM in an ATP-dependent manner. PurS interacts with PurQ and PurL and is thought to assist in the transfer of the ammonia molecule from PurQ to PurL. The protein is Phosphoribosylformylglycinamidine synthase subunit PurL of Campylobacter jejuni (strain RM1221).